A 355-amino-acid polypeptide reads, in one-letter code: Na(+)/H(+) exchange regulatory cofactor NHE-RF1 (355 aa).

Serine 2 is modified (N-acetylserine). Serine 2 and serine 46 each carry phosphoserine. The region spanning 14 to 94 is the PDZ 1 domain; it reads LCCLEKGPNG…AVRLLVVDPE (81 aa). Composition is skewed to basic and acidic residues over residues 110-119 and 127-146; these read LLRPQEKSEQ and DTHE…RELR. Residues 110-146 form a disordered region; the sequence is LLRPQEKSEQAEPPAAADTHEAGDQNEAEKSHLRELR. In terms of domain architecture, PDZ 2 spans 149–229; the sequence is LCTMKKGPNG…EAKLLVVDKE (81 aa). Residues 244–355 form a disordered region; that stretch reads EHLDGPLPEP…SKKNELFSNL (112 aa). Residues 259–268 show a composition bias toward basic and acidic residues; that stretch reads IQKESSREAL. Phosphoserine occurs at positions 264, 275, 285, and 286. The span at 270-286 shows a compositional bias: low complexity; the sequence is EPASESPRPALARSASS. Threonine 288 carries the phosphothreonine modification. 3 positions are modified to phosphoserine: serine 289, serine 294, and serine 297. Low complexity predominate over residues 303–323; the sequence is STEPSSTSSSSSDPILDLNIS. Residues 345 to 355 are compositionally biased toward basic and acidic residues; it reads WSKKNELFSNL.

As to quaternary structure, homodimer, and heterodimer with NHERF2. Binds the N-termini of EZR, RDX and MSN. Binds the C-termini of PDGFRA, PDGFRB, ADRB2 and NOS2. Binds ARHGAP17, EPI64, RACK1, OPRK1, GNAQ, CTNNB1, PLCB3 and CLCN3. Forms a complex with CFTR and SLC4A7. Forms a complex with SLC4A7 and ATP6V1B1. Binds PDZK1. Binds the C-terminus of PAG1. In resting T-cells, part of a PAG1-NHERF1-MSN complex which is disrupted upon TCR activation. Directly interacts with HTR4. Interacts with MCC. Interacts with TRPC4 (via the PDZ-binding domain). Interacts (via the PDZ 1 domain) with PODXL (via the C-terminal PDZ-binding motif DTHL); interaction is not detected in glomerular epithelium cells. Interacts (via the PDZ 1 domain) with PODXL (via the C-terminal PDZ-binding motif DTHL); the interaction take place early in the secretory pathway and is necessary for its apical membrane sorting. Interacts with SLC34A1. Interacts with CFTR, SLC26A3 and SLC26A6. Interacts (via PDZ domains) with ACE2 (via PDZ-binding motif); the interaction may enhance ACE2 membrane residence. Expressed in spermatogenic cells.

Its subcellular location is the cytoplasm. It localises to the apical cell membrane. The protein resides in the cell projection. The protein localises to the filopodium. It is found in the ruffle. Its subcellular location is the microvillus. It localises to the endomembrane system. Its function is as follows. Scaffold protein that connects plasma membrane proteins with members of the ezrin/moesin/radixin family and thereby helps to link them to the actin cytoskeleton and to regulate their surface expression. Necessary for recycling of internalized ADRB2. Was first known to play a role in the regulation of the activity and subcellular location of SLC9A3. Necessary for cAMP-mediated phosphorylation and inhibition of SLC9A3. May enhance Wnt signaling. May participate in HTR4 targeting to microvilli. Involved in the regulation of phosphate reabsorption in the renal proximal tubules. Involved in sperm capacitation. May participate in the regulation of the chloride and bicarbonate homeostasis in spermatozoa. This chain is Na(+)/H(+) exchange regulatory cofactor NHE-RF1 (Nherf1), found in Mus musculus (Mouse).